Reading from the N-terminus, the 201-residue chain is Probable nicotinate-nucleotide adenylyltransferase (201 aa).

Belongs to the NadD family.

It catalyses the reaction nicotinate beta-D-ribonucleotide + ATP + H(+) = deamido-NAD(+) + diphosphate. It participates in cofactor biosynthesis; NAD(+) biosynthesis; deamido-NAD(+) from nicotinate D-ribonucleotide: step 1/1. Functionally, catalyzes the reversible adenylation of nicotinate mononucleotide (NaMN) to nicotinic acid adenine dinucleotide (NaAD). The protein is Probable nicotinate-nucleotide adenylyltransferase of Clostridium botulinum (strain Kyoto / Type A2).